The following is a 180-amino-acid chain: uncharacterized protein (180 aa).

The 150-residue stretch at 31 to 180 (LLVRTAEWLR…HLFEKEITAE (150 aa)) folds into the N-acetyltransferase domain.

The protein belongs to the acetyltransferase family.

This is an uncharacterized protein from Bacillus subtilis (strain 168).